The primary structure comprises 249 residues: Flavin-dependent thymidylate synthase (249 aa).

The region spanning 7–235 (LDVQLIAATA…PVLFDDFHIT (229 aa)) is the ThyX domain. DUMP-binding positions include 94–97 (ELVR), 105–109 (QLSQR), and arginine 174. Residues 97 to 99 (RHR) and glutamine 105 contribute to the FAD site. A ThyX motif motif is present at residues 97–107 (RHRHFSFSQLS). Residues 190-192 (NYR) and histidine 196 contribute to the FAD site. A dUMP-binding site is contributed by arginine 201. Residue arginine 201 is the Involved in ionization of N3 of dUMP, leading to its activation of the active site.

Belongs to the thymidylate synthase ThyX family. Homotetramer. It depends on FAD as a cofactor.

It catalyses the reaction dUMP + (6R)-5,10-methylene-5,6,7,8-tetrahydrofolate + NADPH + H(+) = dTMP + (6S)-5,6,7,8-tetrahydrofolate + NADP(+). Its pathway is pyrimidine metabolism; dTTP biosynthesis. In terms of biological role, catalyzes the reductive methylation of 2'-deoxyuridine-5'-monophosphate (dUMP) to 2'-deoxythymidine-5'-monophosphate (dTMP) while utilizing 5,10-methylenetetrahydrofolate (mTHF) as the methyl donor, and NADPH and FADH(2) as the reductant. In Corynebacterium aurimucosum (strain ATCC 700975 / DSM 44827 / CIP 107346 / CN-1) (Corynebacterium nigricans), this protein is Flavin-dependent thymidylate synthase.